The chain runs to 432 residues: GTPase Obg (432 aa).

The Obg domain occupies 1 to 158 (MFVDQVKIYV…RNIILELKLL (158 aa)). Residues 159–329 (ADVGLVGFPS…LLFAIADLLE (171 aa)) enclose the OBG-type G domain. Residues 165-172 (GFPSVGKS), 190-194 (FTTLV), 212-215 (DLPG), 282-285 (NKMD), and 310-312 (SAA) each bind GTP. Residues serine 172 and threonine 192 each contribute to the Mg(2+) site. An OCT domain is found at 350–428 (KYEKEEPPFT…LLDYEFEFVD (79 aa)).

The protein belongs to the TRAFAC class OBG-HflX-like GTPase superfamily. OBG GTPase family. In terms of assembly, monomer. Requires Mg(2+) as cofactor.

The protein localises to the cytoplasm. In terms of biological role, an essential GTPase which binds GTP, GDP and possibly (p)ppGpp with moderate affinity, with high nucleotide exchange rates and a fairly low GTP hydrolysis rate. Plays a role in control of the cell cycle, stress response, ribosome biogenesis and in those bacteria that undergo differentiation, in morphogenesis control. This is GTPase Obg from Geobacillus kaustophilus (strain HTA426).